A 496-amino-acid chain; its full sequence is Bifunctional protein HldE (496 aa).

The tract at residues Met1–Thr335 is ribokinase. Position 211-214 (Asn211–Glu214) interacts with ATP. Asp280 is an active-site residue. Residues Phe363–Ser496 are cytidylyltransferase.

The protein in the N-terminal section; belongs to the carbohydrate kinase PfkB family. In the C-terminal section; belongs to the cytidylyltransferase family. In terms of assembly, homodimer.

The enzyme catalyses D-glycero-beta-D-manno-heptose 7-phosphate + ATP = D-glycero-beta-D-manno-heptose 1,7-bisphosphate + ADP + H(+). It catalyses the reaction D-glycero-beta-D-manno-heptose 1-phosphate + ATP + H(+) = ADP-D-glycero-beta-D-manno-heptose + diphosphate. The protein operates within nucleotide-sugar biosynthesis; ADP-L-glycero-beta-D-manno-heptose biosynthesis; ADP-L-glycero-beta-D-manno-heptose from D-glycero-beta-D-manno-heptose 7-phosphate: step 1/4. Its pathway is nucleotide-sugar biosynthesis; ADP-L-glycero-beta-D-manno-heptose biosynthesis; ADP-L-glycero-beta-D-manno-heptose from D-glycero-beta-D-manno-heptose 7-phosphate: step 3/4. Its function is as follows. Catalyzes the phosphorylation of D-glycero-D-manno-heptose 7-phosphate at the C-1 position to selectively form D-glycero-beta-D-manno-heptose-1,7-bisphosphate. In terms of biological role, catalyzes the ADP transfer from ATP to D-glycero-beta-D-manno-heptose 1-phosphate, yielding ADP-D-glycero-beta-D-manno-heptose. The sequence is that of Bifunctional protein HldE from Mesorhizobium japonicum (strain LMG 29417 / CECT 9101 / MAFF 303099) (Mesorhizobium loti (strain MAFF 303099)).